The following is a 405-amino-acid chain: MMQQPPPGGILPHHAPPPSAQQQYGYQQPYGIAGAAPPPPQMWNPQAAAPPSVQPTTADEIRTLWIGDLQYWMDENFLYGCFAHTGEMVSAKVIRNKQTGQVEGYGFIEFASHAAAERVLQTFNNAPIPSFPDQLFRLNWASLSSGDKRDDSPDYTIFVGDLAADVTDYILLETFRASYPSVKGAKVVIDRVTGRTKGYGFVRFSDESEQIRAMTEMNGVPCSTRPMRIGPAASKKGVTGQRDSYQSSAAGVTTDNDPNNTTVFVGGLDASVTDDHLKNVFSQYGEIVHVKIPAGKRCGFVQFSEKSCAEEALRMLNGVQLGGTTVRLSWGRSPSNKQSGDPSQFYYGGYGQGQEQYGYTMPQDPNAYYGGYSGGGYSGGYQQTPQAGQQPPQQPPQQQQVGFSY.

Residues 1 to 19 (MMQQPPPGGILPHHAPPPS) show a composition bias toward pro residues. The segment at 1–54 (MMQQPPPGGILPHHAPPPSAQQQYGYQQPYGIAGAAPPPPQMWNPQAAAPPSVQ) is disordered. The span at 20–35 (AQQQYGYQQPYGIAGA) shows a compositional bias: low complexity. RRM domains lie at 62–143 (RTLW…WASL), 155–234 (YTIF…PAAS), and 261–333 (TTVF…WGRS). The interval 379-405 (GGYQQTPQAGQQPPQQPPQQQQVGFSY) is disordered. Residues 380–405 (GYQQTPQAGQQPPQQPPQQQQVGFSY) show a composition bias toward low complexity.

This sequence belongs to the polyadenylate-binding RBP45 family. As to quaternary structure, both isoform 1 and isoform 2 interact with poly(A)+ RNA in nucleus. As to expression, expressed in roots, leaves, stems, flowers, siliques, and seedlings. Present in immature anther tissues (tapetum cells) and mature pollen grains.

The protein localises to the nucleus. Its function is as follows. Heterogeneous nuclear ribonucleoprotein (hnRNP)-protein binding the poly(A) tail of mRNA and probably involved in some steps of pre-mRNA maturation. This is Polyadenylate-binding protein RBP45B (RBP45B) from Arabidopsis thaliana (Mouse-ear cress).